A 444-amino-acid polypeptide reads, in one-letter code: Squalene synthase ERG9 (444 aa).

Residues Phe421–Leu441 form a helical membrane-spanning segment.

The protein belongs to the phytoene/squalene synthase family. Mg(2+) serves as cofactor.

It is found in the endoplasmic reticulum membrane. It localises to the microsome. It carries out the reaction 2 (2E,6E)-farnesyl diphosphate + NADPH + H(+) = squalene + 2 diphosphate + NADP(+). It catalyses the reaction 2 (2E,6E)-farnesyl diphosphate + NADH + H(+) = squalene + 2 diphosphate + NAD(+). Its pathway is terpene metabolism; lanosterol biosynthesis; lanosterol from farnesyl diphosphate: step 1/3. Squalene synthase; part of the third module of ergosterol biosynthesis pathway that includes the late steps of the pathway. ERG9 produces squalene from 2 farnesyl pyrophosphate moieties. The third module or late pathway involves the ergosterol synthesis itself through consecutive reactions that mainly occur in the endoplasmic reticulum (ER) membrane. Firstly, the squalene synthase ERG9 catalyzes the condensation of 2 farnesyl pyrophosphate moieties to form squalene, which is the precursor of all steroids. Squalene synthase is crucial for balancing the incorporation of farnesyl diphosphate (FPP) into sterol and nonsterol isoprene synthesis. Secondly, the squalene epoxidase ERG1 catalyzes the stereospecific oxidation of squalene to (S)-2,3-epoxysqualene, which is considered to be a rate-limiting enzyme in steroid biosynthesis. Then, the lanosterol synthase ERG7 catalyzes the cyclization of (S)-2,3 oxidosqualene to lanosterol, a reaction that forms the sterol core. In the next steps, lanosterol is transformed to zymosterol through a complex process involving various demethylation, reduction and desaturation reactions. The lanosterol 14-alpha-demethylase ERG11 (also known as CYP51) catalyzes C14-demethylation of lanosterol to produce 4,4'-dimethyl cholesta-8,14,24-triene-3-beta-ol, which is critical for ergosterol biosynthesis. The C-14 reductase ERG24 reduces the C14=C15 double bond of 4,4-dimethyl-cholesta-8,14,24-trienol to produce 4,4-dimethyl-cholesta-8,24-dienol. 4,4-dimethyl-cholesta-8,24-dienol is substrate of the C-4 demethylation complex ERG25-ERG26-ERG27 in which ERG25 catalyzes the three-step monooxygenation required for the demethylation of 4,4-dimethyl and 4alpha-methylsterols, ERG26 catalyzes the oxidative decarboxylation that results in a reduction of the 3-beta-hydroxy group at the C-3 carbon to an oxo group, and ERG27 is responsible for the reduction of the keto group on the C-3. ERG28 has a role as a scaffold to help anchor ERG25, ERG26 and ERG27 to the endoplasmic reticulum and ERG29 regulates the activity of the iron-containing C4-methylsterol oxidase ERG25. Then, the sterol 24-C-methyltransferase ERG6 catalyzes the methyl transfer from S-adenosyl-methionine to the C-24 of zymosterol to form fecosterol. The C-8 sterol isomerase ERG2 catalyzes the reaction which results in unsaturation at C-7 in the B ring of sterols and thus converts fecosterol to episterol. The sterol-C5-desaturase ERG3 then catalyzes the introduction of a C-5 double bond in the B ring to produce 5-dehydroepisterol. The C-22 sterol desaturase ERG5 further converts 5-dehydroepisterol into ergosta-5,7,22,24(28)-tetraen-3beta-ol by forming the C-22(23) double bond in the sterol side chain. Finally, ergosta-5,7,22,24(28)-tetraen-3beta-ol is substrate of the C-24(28) sterol reductase ERG4 to produce ergosterol. This Saccharomyces cerevisiae (strain ATCC 204508 / S288c) (Baker's yeast) protein is Squalene synthase ERG9.